Consider the following 114-residue polypeptide: Large ribosomal subunit protein P2v (114 aa).

The segment at 74–114 (VASGGGGGAAPAAEPASVESKKKEEEKEESEDDGGMMSLFD) is disordered. At Ser-103 the chain carries Phosphoserine.

It belongs to the eukaryotic ribosomal protein P1/P2 family. In terms of assembly, P1 and P2 exist as dimers at the large ribosomal subunit. Post-translationally, phosphorylated.

Its function is as follows. Plays an important role in the elongation step of protein synthesis. The protein is Large ribosomal subunit protein P2v (RPP2E) of Arabidopsis thaliana (Mouse-ear cress).